Consider the following 164-residue polypeptide: UBA-like domain-containing protein 2 (164 aa).

Residue S2 is modified to N-acetylserine. The tract at residues 128–164 (SSPTTFHHLHRPQPTWPPGAQQGGAQQKAMAAMDGQR) is disordered. Low complexity predominate over residues 146 to 164 (GAQQGGAQQKAMAAMDGQR).

It belongs to the UBALD family.

This chain is UBA-like domain-containing protein 2 (UBALD2), found in Homo sapiens (Human).